The following is a 299-amino-acid chain: Protein U23 (299 aa).

The N-terminal stretch at 1–27 (MRKSEFNAKSCFLMIGICVFNLNSSSC) is a signal peptide. The chain crosses the membrane as a helical span at residues 247 to 267 (LVIWICGISFVGAFIIVIVIL).

The protein resides in the host membrane. The protein is Protein U23 (U23) of Human herpesvirus 6B (strain Z29) (HHV-6 variant B).